Here is a 602-residue protein sequence, read N- to C-terminus: Elongation factor 4 (602 aa).

The tr-type G domain occupies 7-188 (ENIRNFSIIA…SIIRLVPPPK (182 aa)). Residues 19–24 (DHGKST) and 135–138 (NKID) each bind GTP.

Belongs to the TRAFAC class translation factor GTPase superfamily. Classic translation factor GTPase family. LepA subfamily.

Its subcellular location is the cell inner membrane. The enzyme catalyses GTP + H2O = GDP + phosphate + H(+). Functionally, required for accurate and efficient protein synthesis under certain stress conditions. May act as a fidelity factor of the translation reaction, by catalyzing a one-codon backward translocation of tRNAs on improperly translocated ribosomes. Back-translocation proceeds from a post-translocation (POST) complex to a pre-translocation (PRE) complex, thus giving elongation factor G a second chance to translocate the tRNAs correctly. Binds to ribosomes in a GTP-dependent manner. In Chlamydia muridarum (strain MoPn / Nigg), this protein is Elongation factor 4.